We begin with the raw amino-acid sequence, 252 residues long: 5-oxoprolinase subunit A (252 aa).

Belongs to the LamB/PxpA family. As to quaternary structure, forms a complex composed of PxpA, PxpB and PxpC.

It catalyses the reaction 5-oxo-L-proline + ATP + 2 H2O = L-glutamate + ADP + phosphate + H(+). In terms of biological role, catalyzes the cleavage of 5-oxoproline to form L-glutamate coupled to the hydrolysis of ATP to ADP and inorganic phosphate. The polypeptide is 5-oxoprolinase subunit A (Bordetella pertussis (strain Tohama I / ATCC BAA-589 / NCTC 13251)).